A 612-amino-acid chain; its full sequence is Dihydroxy-acid dehydratase (612 aa).

A Mg(2+)-binding site is contributed by D81. Residue C122 participates in [2Fe-2S] cluster binding. Residues D123 and K124 each contribute to the Mg(2+) site. At K124 the chain carries N6-carboxylysine. [2Fe-2S] cluster is bound at residue C193. Mg(2+) is bound at residue E489. Catalysis depends on S515, which acts as the Proton acceptor.

The protein belongs to the IlvD/Edd family. Homodimer. Requires [2Fe-2S] cluster as cofactor. Mg(2+) serves as cofactor.

The catalysed reaction is (2R)-2,3-dihydroxy-3-methylbutanoate = 3-methyl-2-oxobutanoate + H2O. The enzyme catalyses (2R,3R)-2,3-dihydroxy-3-methylpentanoate = (S)-3-methyl-2-oxopentanoate + H2O. It functions in the pathway amino-acid biosynthesis; L-isoleucine biosynthesis; L-isoleucine from 2-oxobutanoate: step 3/4. It participates in amino-acid biosynthesis; L-valine biosynthesis; L-valine from pyruvate: step 3/4. Functions in the biosynthesis of branched-chain amino acids. Catalyzes the dehydration of (2R,3R)-2,3-dihydroxy-3-methylpentanoate (2,3-dihydroxy-3-methylvalerate) into 2-oxo-3-methylpentanoate (2-oxo-3-methylvalerate) and of (2R)-2,3-dihydroxy-3-methylbutanoate (2,3-dihydroxyisovalerate) into 2-oxo-3-methylbutanoate (2-oxoisovalerate), the penultimate precursor to L-isoleucine and L-valine, respectively. This is Dihydroxy-acid dehydratase from Stenotrophomonas maltophilia (strain R551-3).